A 256-amino-acid polypeptide reads, in one-letter code: Late embryogenesis abundant protein 32 (256 aa).

The segment covering M1 to K14 has biased composition (basic and acidic residues). The tract at residues M1–E20 is disordered. The short motif at Q5 to P9 is the Nuclear localization signal (NLS) element. SMP domains lie at V13 to I66, I130 to T187, and I195 to R253.

It belongs to the LEA type SMP family. Embryo specific, only in dry mature seeds. Expressed at low levels.

It is found in the cytoplasm. The protein localises to the nucleus. Its function is as follows. LEA proteins are late embryonic proteins abundant in higher plant seed embryos. The function of those proteins is not known. This Arabidopsis thaliana (Mouse-ear cress) protein is Late embryogenesis abundant protein 32.